Reading from the N-terminus, the 252-residue chain is MSPLIKLAASSRLHDATHYVLCPFAGGGSGAFRHWRTLSLENEVISVMLYPGREFRIDDPTVINIGTLAEEMIQALKTCNQRIEDTIIVGHSMGAQVAYEASKKLVNQGLFLKGLIISGCQAPHIKGRRLLGECDDKTFIHNLVEIGGCDPSLAKSPEWWPIFLPALRADFTATEQYIFTSLPNDKEGLPIPTLLISGDQDREANFSEIEEWKLWCNKVVDHLVVEGGHFYITEQPQMMLECIRALSTETTA.

Catalysis depends on residues serine 92 and histidine 229.

It belongs to the thioesterase family.

It functions in the pathway siderophore biosynthesis; anguibactin biosynthesis. In terms of biological role, probable thioesterase. Involved in anguibactin production, but is not essential for virulence or iron transport gene expression. In Vibrio anguillarum (strain ATCC 68554 / 775) (Listonella anguillarum), this protein is Probable anguibactin biosynthesis thioesterase AngT (angT).